A 345-amino-acid polypeptide reads, in one-letter code: Hydroxymethylglutaryl-CoA synthase (345 aa).

Asp-28 provides a ligand contact to (3S)-3-hydroxy-3-methylglutaryl-CoA. The active-site Proton donor/acceptor is the Glu-80. (3S)-3-hydroxy-3-methylglutaryl-CoA-binding residues include Cys-112 and Thr-153. Cys-112 acts as the Acyl-thioester intermediate in catalysis. Arg-199 lines the CoA pocket. (3S)-3-hydroxy-3-methylglutaryl-CoA-binding residues include Thr-201 and His-234. His-234 serves as the catalytic Proton donor/acceptor. Lys-239 serves as a coordination point for CoA. Residues Arg-243, Asn-266, and Ser-296 each coordinate (3S)-3-hydroxy-3-methylglutaryl-CoA.

It belongs to the thiolase-like superfamily. Archaeal HMG-CoA synthase family. In terms of assembly, interacts with acetoacetyl-CoA thiolase that catalyzes the precedent step in the pathway and with a DUF35 protein. The acetoacetyl-CoA thiolase/HMG-CoA synthase complex channels the intermediate via a fused CoA-binding site, which allows for efficient coupling of the endergonic thiolase reaction with the exergonic HMGCS reaction.

The enzyme catalyses acetoacetyl-CoA + acetyl-CoA + H2O = (3S)-3-hydroxy-3-methylglutaryl-CoA + CoA + H(+). Its pathway is metabolic intermediate biosynthesis; (R)-mevalonate biosynthesis; (R)-mevalonate from acetyl-CoA: step 2/3. Catalyzes the condensation of acetyl-CoA with acetoacetyl-CoA to form 3-hydroxy-3-methylglutaryl-CoA (HMG-CoA). Functions in the mevalonate (MVA) pathway leading to isopentenyl diphosphate (IPP), a key precursor for the biosynthesis of isoprenoid compounds that are building blocks of archaeal membrane lipids. The chain is Hydroxymethylglutaryl-CoA synthase from Methanobrevibacter smithii (strain ATCC 35061 / DSM 861 / OCM 144 / PS).